Here is a 421-residue protein sequence, read N- to C-terminus: Tyrosine-protein phosphatase non-receptor type 20 (421 aa).

Residues 1–58 (MSSPGNVRQKHGRDNDEHEGDSDDLNLQKSLPSSSQQKTPTKPVFGNKVNSESVKTSH) form a disordered region. Positions 27 to 41 (LQKSLPSSSQQKTPT) are enriched in low complexity. Residues 48–58 (KVNSESVKTSH) are compositionally biased toward polar residues. Ser76 is subject to Phosphoserine. A disordered region spans residues 93–116 (RWSSVDPESAGPSKTVSTVLSESS). Positions 104–116 (PSKTVSTVLSESS) are enriched in polar residues. Ser122 carries the post-translational modification Phosphoserine. The 254-residue stretch at 160 to 413 (IIREFLELEE…QFCYEIVLEV (254 aa)) folds into the Tyrosine-protein phosphatase domain. Residues Asp324, 354 to 360 (CSAGVGR), and Gln398 each bind substrate. Residue Cys354 is the Phosphocysteine intermediate of the active site.

The protein belongs to the protein-tyrosine phosphatase family. Non-receptor class subfamily.

The protein resides in the nucleus. It localises to the cytoplasm. It is found in the cytoskeleton. The protein localises to the microtubule organizing center. Its subcellular location is the centrosome. It catalyses the reaction O-phospho-L-tyrosyl-[protein] + H2O = L-tyrosyl-[protein] + phosphate. Tyrosine-protein phosphatase targeted to sites of actin polymerization in response of varied extracellular stimuli. Has tyrosine phosphatase activity towards various tyrosyl phosphorylated substrates. The polypeptide is Tyrosine-protein phosphatase non-receptor type 20 (Ptpn20) (Rattus norvegicus (Rat)).